Consider the following 263-residue polypeptide: Lens fiber major intrinsic protein (263 aa).

Topologically, residues 1–9 are cytoplasmic; the sequence is MWEFRSFSF. Residues 10–29 form a helical membrane-spanning segment; sequence WRAVFAEFFGTMFYVFFGLG. Residues 30 to 41 are Extracellular-facing; sequence ASLKWAAGPANV. A helical membrane pass occupies residues 42–59; that stretch reads LVIALAFGLVLATMVQSI. The Cytoplasmic segment spans residues 60-61; that stretch reads GH. The discontinuously helical intramembrane region spans 62-77; sequence VSGAHINPAVTFAFLI. The NPA 1 signature appears at 68 to 70; that stretch reads NPA. Topologically, residues 78–82 are cytoplasmic; it reads GSQMS. Residues 83-106 traverse the membrane as a helical segment; it reads LFRAIFYIAAQLLGAVAGAAVLYG. Residues 107-127 lie on the Extracellular side of the membrane; it reads VTPAAIRGNLALNTLHPGVSL. The chain crosses the membrane as a helical span at residues 128-148; it reads GQATTVEIFLTLQFVLCIFAT. Residues 149–156 are Cytoplasmic-facing; that stretch reads YDERRNGR. The helical transmembrane segment at 157 to 175 threads the bilayer; the sequence is LGSVSLAIGFSLTLGHLFG. Residues 176 to 178 are Extracellular-facing; it reads LYY. Residues 179 to 193 constitute an intramembrane region (discontinuously helical); it reads TGASMNPARSFAPAV. An NPA 2 motif is present at residues 184 to 186; it reads NPA. At 194–200 the chain is on the extracellular side; that stretch reads LTRNFTN. A helical transmembrane segment spans residues 201-222; that stretch reads HWVYWVGPIIGGALGGLVYDFI. Over 223-263 the chain is Cytoplasmic; it reads LFPRMRGLSERLSILKGARPAEPEGQQEATGEPIELKTQSL. Residues 227–237 are interaction with CALM; the sequence is MRGLSERLSIL. The tract at residues 241 to 263 is disordered; the sequence is RPAEPEGQQEATGEPIELKTQSL.

The protein belongs to the MIP/aquaporin (TC 1.A.8) family. Homotetramer; each monomer provides an independent water pore. Two homotetramers on opposing membranes can dimerize, forming a cell-cell junction. Interacts with CALM; the calcium-calmodulin/CALM complex interacts with the cytoplasmic domains of two aquaporins, leading to channel closure.

Its subcellular location is the cell membrane. The protein localises to the cell junction. It carries out the reaction H2O(in) = H2O(out). With respect to regulation, the water channel activity is inhibited by calcium through calmodulin/CALM. In terms of biological role, aquaporins form homotetrameric transmembrane channels, with each monomer independently mediating water transport across the plasma membrane along its osmotic gradient. Specifically expressed in lens fiber cells, this aquaporin is crucial for maintaining lens water homeostasis and transparency. Beyond water permeability, it also acts as a cell-to-cell adhesion molecule, forming thin junctions between lens fiber cells that are essential for maintaining the ordered structure and transparency of the lens. The protein is Lens fiber major intrinsic protein of Lithobates pipiens (Northern leopard frog).